The sequence spans 162 residues: SCF ubiquitin ligase complex protein SKP1b (162 aa).

Ser-2 is subject to N-acetylserine. Positions 100–162 (ILAANYLDIK…NEWCEDKGGN (63 aa)) are interaction with the F-box domain of F-box proteins. Pro-143 carries the post-translational modification 4-hydroxyproline. An O-linked (GlcNAc...) hydroxyproline glycan is attached at Pro-143.

It belongs to the SKP1 family. As to quaternary structure, multiprotein complex (SCF) with cullin and F-box-containing protein. Capable of undergoing aggregation. Post-translationally, O-linked glycan consists of linear Gal-Gal-Fuc-Gal-GlcNAc. Not glycosylated in prespore cells. In terms of processing, fpaA and fpaB seem to be identically glycosylated. Glycosylation is required for nuclear enrichment. Post-translationally, hydroxylated by phyA.

The protein resides in the cytoplasm. It is found in the nucleus. The protein is SCF ubiquitin ligase complex protein SKP1b (fpaB-1) of Dictyostelium discoideum (Social amoeba).